Consider the following 260-residue polypeptide: 2-amino-3,7-dideoxy-D-threo-hept-6-ulosonate synthase 1 (260 aa).

Asp-26 functions as the Proton acceptor in the catalytic mechanism. Residues 26 to 30 (DHGIT) and 144 to 146 (YPR) each bind 1-deoxy-D-threo-hexo-2,5-diulose 6-phosphate. Tyr-144 acts as the Proton donor in catalysis. Lys-172 (schiff-base intermediate with substrate) is an active-site residue. 1-deoxy-D-threo-hexo-2,5-diulose 6-phosphate-binding positions include 194–195 (GG) and 221–222 (GR).

It belongs to the DeoC/FbaB aldolase family. ADHS subfamily. As to quaternary structure, homodecamer.

The enzyme catalyses 1-deoxy-D-threo-hexo-2,5-diulose 6-phosphate + L-aspartate 4-semialdehyde = 2,3-dioxopropyl phosphate + 2-amino-2,3,7-trideoxy-D-lyxo-hept-6-ulosonate. Its function is as follows. Catalyzes a transaldol reaction between 6-deoxy-5-ketofructose 1-phosphate (DKFP) and L-aspartate semialdehyde (ASA) with an elimination of hydroxypyruvaldehyde phosphate to yield 2-amino-3,7-dideoxy-D-threo-hept-6-ulosonate (ADH). Plays a key role in an alternative pathway of the biosynthesis of 3-dehydroquinate (DHQ), which is involved in the canonical pathway for the biosynthesis of aromatic amino acids. In Archaeoglobus fulgidus (strain ATCC 49558 / DSM 4304 / JCM 9628 / NBRC 100126 / VC-16), this protein is 2-amino-3,7-dideoxy-D-threo-hept-6-ulosonate synthase 1.